The following is a 469-amino-acid chain: Glutamate--tRNA ligase 1 (469 aa).

The 'HIGH' region signature appears at 10-20 (PSPTGYLHVGG). Positions 252-256 (KLSKR) match the 'KMSKS' region motif. Lys255 lines the ATP pocket.

This sequence belongs to the class-I aminoacyl-tRNA synthetase family. Glutamate--tRNA ligase type 1 subfamily. As to quaternary structure, monomer.

The protein resides in the cytoplasm. It catalyses the reaction tRNA(Glu) + L-glutamate + ATP = L-glutamyl-tRNA(Glu) + AMP + diphosphate. Functionally, catalyzes the attachment of glutamate to tRNA(Glu) in a two-step reaction: glutamate is first activated by ATP to form Glu-AMP and then transferred to the acceptor end of tRNA(Glu). This chain is Glutamate--tRNA ligase 1, found in Fervidobacterium nodosum (strain ATCC 35602 / DSM 5306 / Rt17-B1).